The chain runs to 239 residues: Glycerol-3-phosphate acyltransferase (239 aa).

A run of 6 helical transmembrane segments spans residues 6-26, 61-81, 99-119, 135-155, 159-179, and 199-219; these read AIAL…SVMF, FLVG…SFLI, YYLT…PLYF, LAIS…VTLI, VSLA…VPWL, and WYII…VFWL.

This sequence belongs to the PlsY family. Probably interacts with PlsX.

It is found in the cell membrane. The enzyme catalyses an acyl phosphate + sn-glycerol 3-phosphate = a 1-acyl-sn-glycero-3-phosphate + phosphate. It participates in lipid metabolism; phospholipid metabolism. Its function is as follows. Catalyzes the transfer of an acyl group from acyl-phosphate (acyl-PO(4)) to glycerol-3-phosphate (G3P) to form lysophosphatidic acid (LPA). This enzyme utilizes acyl-phosphate as fatty acyl donor, but not acyl-CoA or acyl-ACP. The sequence is that of Glycerol-3-phosphate acyltransferase from Mycoplasma pneumoniae (strain ATCC 29342 / M129 / Subtype 1) (Mycoplasmoides pneumoniae).